The sequence spans 530 residues: ATP-dependent 6-phosphofructokinase 4, chloroplastic (530 aa).

A chloroplast-targeting transit peptide spans 1-54; it reads MEASISFLGSTKPNISLFNPSSNVLPRRDFPLPALKLKKVSVLPRILHQKRLIR. Position 121 is a phosphoserine (Ser-121). Residues Gly-152, 215–216, and 240–243 each bind ATP; these read RG and GGGT. Substrate contacts are provided by residues 269–271, 314–316, Glu-370, and 427–430; these read TID, MGR, and YMIR. Asp-271 acts as the Proton acceptor in catalysis.

This sequence belongs to the phosphofructokinase type A (PFKA) family. PPi-dependent PFK group II subfamily. Atypical ATP-dependent clade 'X' sub-subfamily. As to quaternary structure, homotetramer. The cofactor is Mg(2+). In terms of tissue distribution, expressed in leaves, stems and flowers.

The protein resides in the plastid. It is found in the chloroplast. The enzyme catalyses beta-D-fructose 6-phosphate + ATP = beta-D-fructose 1,6-bisphosphate + ADP + H(+). It participates in carbohydrate degradation; glycolysis; D-glyceraldehyde 3-phosphate and glycerone phosphate from D-glucose: step 3/4. Its activity is regulated as follows. Allosterically activated by AMP. Catalyzes the phosphorylation of D-fructose 6-phosphate to fructose 1,6-bisphosphate by ATP, the first committing step of glycolysis. This chain is ATP-dependent 6-phosphofructokinase 4, chloroplastic, found in Arabidopsis thaliana (Mouse-ear cress).